The chain runs to 307 residues: Dihydroorotate dehydrogenase A (fumarate) (307 aa).

Residues serine 21 and 46 to 47 (KT) each bind FMN. Substrate-binding positions include lysine 46, 70-74 (NSVGL), and asparagine 130. Asparagine 130 serves as a coordination point for FMN. The active-site Nucleophile is the cysteine 133. 2 residues coordinate FMN: lysine 168 and isoleucine 194. A substrate-binding site is contributed by 195–196 (NT). Residues glycine 220, 246–247 (GG), and 268–269 (GS) contribute to the FMN site.

The protein belongs to the dihydroorotate dehydrogenase family. Type 1 subfamily. Homodimer. The cofactor is FMN.

It is found in the cytoplasm. It carries out the reaction (S)-dihydroorotate + fumarate = orotate + succinate. Its pathway is pyrimidine metabolism; UMP biosynthesis via de novo pathway. Functionally, catalyzes the conversion of dihydroorotate to orotate with fumarate as the electron acceptor. The sequence is that of Dihydroorotate dehydrogenase A (fumarate) (pyrD) from Lactobacillus delbrueckii subsp. bulgaricus (strain ATCC 11842 / DSM 20081 / BCRC 10696 / JCM 1002 / NBRC 13953 / NCIMB 11778 / NCTC 12712 / WDCM 00102 / Lb 14).